Consider the following 227-residue polypeptide: Large ribosomal subunit protein uL3 (227 aa).

The interval 129-154 (GMQPVSHGQSDRTRSRGSSGAQGPQK) is disordered.

The protein belongs to the universal ribosomal protein uL3 family. As to quaternary structure, part of the 50S ribosomal subunit. Forms a cluster with proteins L14 and L19.

In terms of biological role, one of the primary rRNA binding proteins, it binds directly near the 3'-end of the 23S rRNA, where it nucleates assembly of the 50S subunit. The sequence is that of Large ribosomal subunit protein uL3 from Endomicrobium trichonymphae.